Here is a 360-residue protein sequence, read N- to C-terminus: Cytokine receptor-like factor 2 (360 aa).

An N-terminal signal peptide occupies residues 1-18 (MRAVTWAIVAMLLPRVLG). Residues 27-238 (TGGVGDTLSV…PRTPGTPTPP (212 aa)) are Extracellular-facing. Residue N62 is glycosylated (N-linked (GlcNAc...) asparagine). A disulfide bond links C77 and C90. In terms of domain architecture, Fibronectin type-III spans 123 to 214 (RPRPPWNVTL…PSKWTGVASL (92 aa)). N-linked (GlcNAc...) asparagine glycosylation is found at N129 and N174. A disulfide bridge links C185 with C223. The WSXWS motif signature appears at 205–209 (PSKWT). Residues 239-259 (LALACGLAVALLTLVLLLALL) form a helical membrane-spanning segment. The Cytoplasmic segment spans residues 260–360 (RMRRVKEALL…LMGDSGYTTL (101 aa)). The Box 1 motif signature appears at 268–276 (LLPGVPDPR).

The protein belongs to the type I cytokine receptor family. Type 5 subfamily. Heterodimer of CRLF2 and IL7R. As to expression, expressed in all tissues examined including brain, thymus, lung, heart, muscle, stomach, small intestine, liver, kidney, spleen, testis and skin. Highest levels in thymus, liver and testis.

Its subcellular location is the membrane. Receptor for thymic stromal lymphopoietin (TSLP). Forms a functional complex with TSLP and IL7R which is capable of stimulating cell proliferation through activation of STAT3 and STAT5. Also activates JAK2. Implicated in the development of the hematopoietic system. In Rattus norvegicus (Rat), this protein is Cytokine receptor-like factor 2 (Crlf2).